The primary structure comprises 372 residues: Anhydro-N-acetylmuramic acid kinase (372 aa).

14–21 contributes to the ATP binding site; sequence GTSLDGVD.

The protein belongs to the anhydro-N-acetylmuramic acid kinase family.

It catalyses the reaction 1,6-anhydro-N-acetyl-beta-muramate + ATP + H2O = N-acetyl-D-muramate 6-phosphate + ADP + H(+). Its pathway is amino-sugar metabolism; 1,6-anhydro-N-acetylmuramate degradation. The protein operates within cell wall biogenesis; peptidoglycan recycling. Its function is as follows. Catalyzes the specific phosphorylation of 1,6-anhydro-N-acetylmuramic acid (anhMurNAc) with the simultaneous cleavage of the 1,6-anhydro ring, generating MurNAc-6-P. Is required for the utilization of anhMurNAc either imported from the medium or derived from its own cell wall murein, and thus plays a role in cell wall recycling. The protein is Anhydro-N-acetylmuramic acid kinase of Photorhabdus laumondii subsp. laumondii (strain DSM 15139 / CIP 105565 / TT01) (Photorhabdus luminescens subsp. laumondii).